A 113-amino-acid chain; its full sequence is Regulator of rDNA transcription protein 7 (113 aa).

A run of 2 helical transmembrane segments spans residues 13 to 35 and 70 to 92; these read FLPIASFLTILNRILFQYWLFYN and FLLGFMVQLQSCVKLLPLYLLFL.

Its subcellular location is the membrane. Its function is as follows. Identified in a screen for mutants with decreased levels of rDNA transcription. The chain is Regulator of rDNA transcription protein 7 (RRT7) from Saccharomyces cerevisiae (strain ATCC 204508 / S288c) (Baker's yeast).